The primary structure comprises 269 residues: MATVPELNCEMPPFDSDENDLFFEVDGPQKMKGCFQTFDLGCPDESIQLQISQQHINKSFRQAVSLIVAVEKLWQLPVSFPWTFQDEDMSTFFSFIFEEEPILCDSWDDDDNLLVCDVPIRQLHYRLRDEQQKSLVLSDPYELKALHLNGQNINQQVIFSMSFVQGEPSNDKIPVALGLKGKNLYLSCVMKDGTPTLQLESVDPKQYPKKKMEKRFVFNKIEVKSKVEFESAEFPNWYISTSQAEHKPVFLGNNSGQDIIDFTMESVSS.

The propeptide occupies 1-117; that stretch reads MATVPELNCE…DDDDNLLVCD (117 aa).

Belongs to the IL-1 family. As to quaternary structure, monomer. Interacts with MEFV. Interacts with integrins ITGAV:ITGBV and ITGA5:ITGB1; integrin-binding is required for IL1B signaling. Interacts with cargo receptor TMED10; the interaction is direct and is required for the secretion of IL1B mature form. Interacts with HSP90AB1; the interaction facilitates cargo translocation into the ERGIC. Interacts with HSP90B1; the interaction facilitates cargo translocation into the ERGIC. As to expression, expressed in activated macrophages (at protein level).

It localises to the cytoplasm. Its subcellular location is the cytosol. It is found in the secreted. The protein resides in the lysosome. The protein localises to the extracellular exosome. Its function is as follows. Potent pro-inflammatory cytokine. Initially discovered as the major endogenous pyrogen, induces prostaglandin synthesis, neutrophil influx and activation, T-cell activation and cytokine production, B-cell activation and antibody production, and fibroblast proliferation and collagen production. Promotes Th17 differentiation of T-cells. Synergizes with IL12/interleukin-12 to induce IFNG synthesis from T-helper 1 (Th1) cells. Plays a role in angiogenesis by inducing VEGF production synergistically with TNF and IL6. Involved in transduction of inflammation downstream of pyroptosis: its mature form is specifically released in the extracellular milieu by passing through the gasdermin-D (GSDMD) pore. The sequence is that of Interleukin-1 beta (Il1b) from Mus musculus (Mouse).